The sequence spans 153 residues: Regulator of sigma D (153 aa).

The protein belongs to the Rsd/AlgQ family. Interacts with RpoD.

It localises to the cytoplasm. Its function is as follows. Binds RpoD and negatively regulates RpoD-mediated transcription activation by preventing the interaction between the primary sigma factor RpoD with the catalytic core of the RNA polymerase and with promoter DNA. May be involved in replacement of the RNA polymerase sigma subunit from RpoD to RpoS during the transition from exponential growth to the stationary phase. The chain is Regulator of sigma D from Pectobacterium atrosepticum (strain SCRI 1043 / ATCC BAA-672) (Erwinia carotovora subsp. atroseptica).